A 221-amino-acid polypeptide reads, in one-letter code: Alpha-ketoglutarate-dependent dioxygenase alkB homolog 7, mitochondrial (221 aa).

The transit peptide at 1-23 (MAGGGQVVLRTLSQQGWVRGSGA) directs the protein to the mitochondrion. Fe cation contacts are provided by His121 and Asp123. Tyr165 is a 2-oxoglutarate binding site. Residue His177 participates in Fe cation binding. 2-oxoglutarate-binding positions include 197-199 (RIS) and Arg203.

It belongs to the alkB family. It depends on Fe(2+) as a cofactor.

The protein resides in the mitochondrion matrix. May function as protein hydroxylase; can catalyze auto-hydroxylation at Leu-110 (in vitro), but this activity may be due to the absence of the true substrate. Required to induce programmed necrosis in response to DNA damage caused by cytotoxic alkylating agents. Acts by triggering the collapse of mitochondrial membrane potential and loss of mitochondrial function that leads to energy depletion and cell death. ALKBH7-mediated necrosis is probably required to prevent the accumulation of cells with DNA damage. Does not display DNA demethylase activity. Involved in fatty acid metabolism. In Bos taurus (Bovine), this protein is Alpha-ketoglutarate-dependent dioxygenase alkB homolog 7, mitochondrial (ALKBH7).